Consider the following 1020-residue polypeptide: Contactin-1 (1020 aa).

An N-terminal signal peptide occupies residues 1–20 (MKMPLLVSHLLLISLTSCLG). Ig-like C2-type domains lie at 41–131 (PIFE…ATLS), 137–223 (PFPP…KSVF), 241–326 (PADI…ARIY), 331–407 (PEWV…AELK), 413–500 (PTFE…GTLV), and 504–603 (PTRI…LVVR). 2 disulfide bridges follow: Cys65/Cys114 and Cys158/Cys211. 2 N-linked (GlcNAc...) asparagine glycosylation sites follow: Asn208 and Asn258. A disulfide bridge links Cys263 with Cys310. Residue Asn338 is glycosylated (N-linked (GlcNAc...) asparagine). Cystine bridges form between Cys352–Cys391 and Cys436–Cys484. Asn457, Asn473, Asn494, and Asn521 each carry an N-linked (GlcNAc...) asparagine glycan. Cys526 and Cys585 are joined by a disulfide. The N-linked (GlcNAc...) asparagine glycan is linked to Asn593. Fibronectin type-III domains lie at 608-706 (PPGG…TDGA), 711-808 (APSD…SAQD), 813-908 (APTE…APPS), and 909-1002 (QPPR…TLSS). The disordered stretch occupies residues 695–719 (SIPSNRIKTDGAAPNVAPSDVGGGG). N-linked (GlcNAc...) asparagine glycosylation occurs at Asn935. Residue Ser1001 is the site of GPI-anchor amidated serine attachment. A propeptide spans 1002-1020 (SSLLSLLLPSLGFLVYSEF) (removed in mature form).

It belongs to the immunoglobulin superfamily. Contactin family. As to quaternary structure, monomer. Interacts with CNTNAP1 in cis form. Binds to the carbonic-anhydrase like domain of PTPRZ1. Interacts with NOTCH1 and TNR. Detected in a complex with NRCAM and PTPRB. Interacts with TASOR. In terms of tissue distribution, expressed in the ovary and in Sertoli cells of the testis.

It localises to the cell membrane. Functionally, contactins mediate cell surface interactions during nervous system development. Involved in the formation of paranodal axo-glial junctions in myelinated peripheral nerves and in the signaling between axons and myelinating glial cells via its association with CNTNAP1. Participates in oligodendrocytes generation by acting as a ligand of NOTCH1. Its association with NOTCH1 promotes NOTCH1 activation through the released notch intracellular domain (NICD) and subsequent translocation to the nucleus. Interaction with TNR induces a repulsion of neurons and an inhibition of neurite outgrowth. The sequence is that of Contactin-1 (Cntn1) from Mus musculus (Mouse).